The primary structure comprises 527 residues: Bifunctional purine biosynthesis protein PurH (527 aa).

The 149-residue stretch at 1-149 folds into the MGS-like domain; it reads MASDFLPVHR…KNFARVAVAT (149 aa).

This sequence belongs to the PurH family.

It carries out the reaction (6R)-10-formyltetrahydrofolate + 5-amino-1-(5-phospho-beta-D-ribosyl)imidazole-4-carboxamide = 5-formamido-1-(5-phospho-D-ribosyl)imidazole-4-carboxamide + (6S)-5,6,7,8-tetrahydrofolate. The enzyme catalyses IMP + H2O = 5-formamido-1-(5-phospho-D-ribosyl)imidazole-4-carboxamide. It participates in purine metabolism; IMP biosynthesis via de novo pathway; 5-formamido-1-(5-phospho-D-ribosyl)imidazole-4-carboxamide from 5-amino-1-(5-phospho-D-ribosyl)imidazole-4-carboxamide (10-formyl THF route): step 1/1. It functions in the pathway purine metabolism; IMP biosynthesis via de novo pathway; IMP from 5-formamido-1-(5-phospho-D-ribosyl)imidazole-4-carboxamide: step 1/1. This Xylella fastidiosa (strain 9a5c) protein is Bifunctional purine biosynthesis protein PurH.